Here is a 226-residue protein sequence, read N- to C-terminus: Urease accessory protein UreG (226 aa).

Positions 1–26 (MPPHFLDGQPHGHTDRPRRVRQPGEP) are disordered. A GTP-binding site is contributed by 33-40 (GPVGSGKT).

Belongs to the SIMIBI class G3E GTPase family. UreG subfamily. As to quaternary structure, homodimer. UreD, UreF and UreG form a complex that acts as a GTP-hydrolysis-dependent molecular chaperone, activating the urease apoprotein by helping to assemble the nickel containing metallocenter of UreC. The UreE protein probably delivers the nickel.

It localises to the cytoplasm. Its function is as follows. Facilitates the functional incorporation of the urease nickel metallocenter. This process requires GTP hydrolysis, probably effectuated by UreG. This Mycolicibacterium vanbaalenii (strain DSM 7251 / JCM 13017 / BCRC 16820 / KCTC 9966 / NRRL B-24157 / PYR-1) (Mycobacterium vanbaalenii) protein is Urease accessory protein UreG.